The primary structure comprises 161 residues: ATP synthase subunit b (161 aa).

A helical transmembrane segment spans residues 12–32 (IAFFLFVFFCMKYIWPNLISL).

It belongs to the ATPase B chain family. As to quaternary structure, F-type ATPases have 2 components, F(1) - the catalytic core - and F(0) - the membrane proton channel. F(1) has five subunits: alpha(3), beta(3), gamma(1), delta(1), epsilon(1). F(0) has three main subunits: a(1), b(2) and c(10-14). The alpha and beta chains form an alternating ring which encloses part of the gamma chain. F(1) is attached to F(0) by a central stalk formed by the gamma and epsilon chains, while a peripheral stalk is formed by the delta and b chains.

The protein localises to the cell membrane. Its function is as follows. F(1)F(0) ATP synthase produces ATP from ADP in the presence of a proton or sodium gradient. F-type ATPases consist of two structural domains, F(1) containing the extramembraneous catalytic core and F(0) containing the membrane proton channel, linked together by a central stalk and a peripheral stalk. During catalysis, ATP synthesis in the catalytic domain of F(1) is coupled via a rotary mechanism of the central stalk subunits to proton translocation. Functionally, component of the F(0) channel, it forms part of the peripheral stalk, linking F(1) to F(0). In Wigglesworthia glossinidia brevipalpis, this protein is ATP synthase subunit b.